A 1256-amino-acid chain; its full sequence is Protein flightless-1 (1256 aa).

LRR repeat units follow at residues 4 to 28, 29 to 51, 52 to 74, 75 to 99, 100 to 122, 124 to 145, 147 to 169, 171 to 192, 218 to 241, 243 to 264, 265 to 287, 289 to 312, 313 to 335, 336 to 358, and 360 to 381; these read LPFVRGVDFTKNDFSATFPSSMRQM, SRVQWLTLDRTQLAEIPEELGHL, QKLEHLSLNHNRLEKIFGELTEL, SCLRSLDLRHNQLKNSGIPPELFHL, EELTTLDLSHNKLKEVPEGLERA, NLIVLNLSNNQIESIPTPLFIH, TDLLFLDLSHNRLETLPPQTRRL, NLKTLDLSHNPLELFQLRQLPS, LANLCELDLSHNSLPKLPDCVYNV, TLVRLNLSDNELTELTAGVELW, QRLESLNLSRNQLVALPAALCKL, KLRRLLVNDNKLNFEGIPSGIGKL, GALEVFSAANNLLEMVPEGLCRC, GALKQLNLSCNRLITLPDAIHLL, and GLDQLDLRNNPELVMPPKPSEA. The tract at residues 405–476 is disordered; sequence AAVPPSMPSS…ESLKPKRWDE (72 aa). Residues 431–476 are compositionally biased toward basic and acidic residues; it reads PRSEGDQDAAKVLKGMKDVAKDKDNEAGAVPEDGKPESLKPKRWDE. 4 Gelsolin-like repeats span residues 512 to 589, 633 to 703, 749 to 822, and 1168 to 1242; these read IEEV…EQFL, EPVA…AEFW, VELP…MQIF, and EKCA…SRRF.

It belongs to the villin/gelsolin family. In terms of tissue distribution, found in ovaries, larval fat bodies, brain and adult thorax.

In terms of biological role, may play a key role in embryonic cellularization by interacting with both the cytoskeleton and other cellular components. Alternatively, it may play a structural role in indirect flight muscle. Vital for embryonic development. The polypeptide is Protein flightless-1 (fliI) (Drosophila melanogaster (Fruit fly)).